The sequence spans 575 residues: Adenine deaminase (575 aa).

This sequence belongs to the metallo-dependent hydrolases superfamily. Adenine deaminase family. The cofactor is Mn(2+).

It catalyses the reaction adenine + H2O + H(+) = hypoxanthine + NH4(+). The polypeptide is Adenine deaminase (Nitratidesulfovibrio vulgaris (strain DP4) (Desulfovibrio vulgaris)).